The following is a 122-amino-acid chain: Ribosome-binding factor A (122 aa).

It belongs to the RbfA family. As to quaternary structure, monomer. Binds 30S ribosomal subunits, but not 50S ribosomal subunits or 70S ribosomes.

The protein resides in the cytoplasm. Functionally, one of several proteins that assist in the late maturation steps of the functional core of the 30S ribosomal subunit. Associates with free 30S ribosomal subunits (but not with 30S subunits that are part of 70S ribosomes or polysomes). Required for efficient processing of 16S rRNA. May interact with the 5'-terminal helix region of 16S rRNA. In Opitutus terrae (strain DSM 11246 / JCM 15787 / PB90-1), this protein is Ribosome-binding factor A.